We begin with the raw amino-acid sequence, 160 residues long: MSSEEGKLFVGGLNFNTDERALEDHFSSFGPISEVVVVKDRETQRSRGFGFITFTNPEHASNAMRAMNGESLDGRQIRVDHAGKSARGSRGGAFGSYERGRGYPRGGGDQGYGSGRYDNRPGAYGFGYGYGYGRSRDYGGRSQGGYDRYSGGNYRDNYDN.

An RRM domain is found at 6-84 (GKLFVGGLNF…RQIRVDHAGK (79 aa)). Residue Arg-47 is modified to Omega-N-methylarginine. The tract at residues 81-116 (HAGKSARGSRGGAFGSYERGRGYPRGGGDQGYGSGR) is disordered. Positions 103 to 114 (YPRGGGDQGYGS) are enriched in gly residues. At Arg-105 the chain carries Asymmetric dimethylarginine; alternate. Residue Arg-105 is modified to Dimethylated arginine; alternate. An Omega-N-methylarginine; alternate modification is found at Arg-105. Omega-N-methylarginine occurs at positions 120 and 134. The segment at 135–160 (SRDYGGRSQGGYDRYSGGNYRDNYDN) is disordered. Residue Ser-150 is modified to Phosphoserine. Tyr-158 bears the Phosphotyrosine mark.

In terms of assembly, interacts with RPL4. Associates with the 60S ribosomal subunits.

The protein resides in the nucleus. It is found in the cytoplasm. It localises to the cell projection. Its subcellular location is the dendrite. Cold-inducible mRNA binding protein that enhances global protein synthesis at both physiological and mild hypothermic temperatures. Reduces the relative abundance of microRNAs, when overexpressed. Enhances phosphorylation of translation initiation factors and active polysome formation. This chain is RNA-binding protein 3, found in Capra hircus (Goat).